The following is a 147-amino-acid chain: 3-dehydroquinate dehydratase (147 aa).

The Proton acceptor role is filled by Tyr-23. 3 residues coordinate substrate: Asn-74, His-80, and Asp-87. Residue His-100 is the Proton donor of the active site. Substrate contacts are provided by residues 101–102 (IS) and Arg-111.

The protein belongs to the type-II 3-dehydroquinase family. In terms of assembly, homododecamer.

It carries out the reaction 3-dehydroquinate = 3-dehydroshikimate + H2O. It participates in metabolic intermediate biosynthesis; chorismate biosynthesis; chorismate from D-erythrose 4-phosphate and phosphoenolpyruvate: step 3/7. Its function is as follows. Catalyzes a trans-dehydration via an enolate intermediate. This chain is 3-dehydroquinate dehydratase, found in Prochlorococcus marinus (strain MIT 9215).